A 329-amino-acid chain; its full sequence is Galactosylgalactosylxylosylprotein 3-beta-glucuronosyltransferase 2 (329 aa).

Residues 1–2 (MK) lie on the Cytoplasmic side of the membrane. The helical; Signal-anchor for type II membrane protein transmembrane segment at 3–23 (SALFSRFFILLPWILIVIIML) threads the bilayer. The Lumenal segment spans residues 24–329 (DVDTRRPAPP…YRLDTVKIEV (306 aa)). Residues 45-87 (VGRGGARLPPRRGGPDSGPGRGWEKRNESRPHARPRPEPPLPT) are disordered. The span at 66-81 (GWEKRNESRPHARPRP) shows a compositional bias: basic and acidic residues. N71 carries an N-linked (GlcNAc...) asparagine glycan. UDP-alpha-D-glucuronate-binding positions include 93 to 95 (PTY), D124, R161, R166, and 191 to 193 (DDD). D193 is a Mn(2+) binding site. Residues 240-249 (WRADRPFAID) form an interaction with galactose moiety of substrate glycoprotein region. E279 (proton donor/acceptor) is an active-site residue. N298 carries an N-linked (GlcNAc...) asparagine glycan. 306–308 (HTR) serves as a coordination point for UDP-alpha-D-glucuronate.

The protein belongs to the glycosyltransferase 43 family. Homodimer. It depends on Mn(2+) as a cofactor.

It localises to the golgi apparatus membrane. The enzyme catalyses 3-O-(beta-D-galactosyl-(1-&gt;3)-beta-D-galactosyl-(1-&gt;4)-beta-D-xylosyl)-L-seryl-[protein] + UDP-alpha-D-glucuronate = 3-O-(beta-D-GlcA-(1-&gt;3)-beta-D-Gal-(1-&gt;3)-beta-D-Gal-(1-&gt;4)-beta-D-Xyl)-L-seryl-[protein] + UDP + H(+). Its pathway is protein modification; protein glycosylation. In terms of biological role, involved in the biosynthesis of L2/HNK-1 carbohydrate epitope on both glycolipids and glycoproteins. The chain is Galactosylgalactosylxylosylprotein 3-beta-glucuronosyltransferase 2 (B3GAT2) from Canis lupus familiaris (Dog).